The chain runs to 149 residues: 3-hydroxyacyl-[acyl-carrier-protein] dehydratase FabZ (149 aa).

His50 is a catalytic residue.

The protein belongs to the thioester dehydratase family. FabZ subfamily.

The protein resides in the cytoplasm. It catalyses the reaction a (3R)-hydroxyacyl-[ACP] = a (2E)-enoyl-[ACP] + H2O. Involved in unsaturated fatty acids biosynthesis. Catalyzes the dehydration of short chain beta-hydroxyacyl-ACPs and long chain saturated and unsaturated beta-hydroxyacyl-ACPs. In Pediococcus pentosaceus (strain ATCC 25745 / CCUG 21536 / LMG 10740 / 183-1w), this protein is 3-hydroxyacyl-[acyl-carrier-protein] dehydratase FabZ.